The sequence spans 267 residues: Cytochrome b (267 aa).

4 helical membrane passes run 4 to 24, 48 to 69, 84 to 104, and 149 to 169; these read FGSL…LLAA, WLIR…YLHI, WNTG…GYVL, and FFTL…IHLT. 2 residues coordinate heme b: His-54 and His-68. The heme b site is built by His-153 and His-167. His-172 is a binding site for a ubiquinone. Transmembrane regions (helical) follow at residues 197–217 and 259–267; these read LKDI…ALFA and LGGVLALAA.

The protein belongs to the cytochrome b family. In terms of assembly, the cytochrome bc1 complex contains 11 subunits: 3 respiratory subunits (MT-CYB, CYC1 and UQCRFS1), 2 core proteins (UQCRC1 and UQCRC2) and 6 low-molecular weight proteins (UQCRH/QCR6, UQCRB/QCR7, UQCRQ/QCR8, UQCR10/QCR9, UQCR11/QCR10 and a cleavage product of UQCRFS1). This cytochrome bc1 complex then forms a dimer. It depends on heme b as a cofactor.

It localises to the mitochondrion inner membrane. In terms of biological role, component of the ubiquinol-cytochrome c reductase complex (complex III or cytochrome b-c1 complex) that is part of the mitochondrial respiratory chain. The b-c1 complex mediates electron transfer from ubiquinol to cytochrome c. Contributes to the generation of a proton gradient across the mitochondrial membrane that is then used for ATP synthesis. The chain is Cytochrome b (MT-CYB) from Raphus cucullatus (Dodo).